A 76-amino-acid chain; its full sequence is MLLEFKQFLYEASIDEFMGKIASCQTLEGLEELEAYYKKRVKETELKDTDDISVRDALAGKRAELEDSDDEVEESF.

Probably interacts with UvsW.

Inhibits the single-stranded annealing activity of UvsW, has no effect on UvsW helicase activity. The sequence is that of Protein UvsW.1 from Escherichia coli (Bacteriophage T4).